The sequence spans 51 residues: Small polypeptide DEVIL 1 (51 aa).

The interval 1–25 (MEMKRVMMSSAERSKEKKRSISRRL) is disordered. Residues 16 to 25 (EKKRSISRRL) are compositionally biased toward basic residues. Positions 20 to 51 (SISRRLGKYMKEQKGRIYIIRRCMVMLLCSHD) are required for DVL/RTFL small polypeptide activity. The helical transmembrane segment at 28 to 44 (YMKEQKGRIYIIRRCMV) threads the bilayer.

It belongs to the DVL/RTFL small polypeptides family. In terms of tissue distribution, mostly expressed in leaves and, to a lower extent, in roots and stems.

The protein localises to the cell membrane. Its function is as follows. Small polypeptide acting as a regulatory molecule which coordinates cellular responses required for differentiation, growth and development, including leaves shape, pedicule elongation, inflorescence organization and fruit maturation, probably by restricting polar cell proliferation in lateral organs and coordinating socket cell recruitment and differentiation at trichome sites. This Arabidopsis thaliana (Mouse-ear cress) protein is Small polypeptide DEVIL 1.